A 204-amino-acid chain; its full sequence is Minor allergen Alt a 7 (204 aa).

The Flavodoxin-like domain occupies 5 to 195 (IAIVYYSMYG…NIAQAQGKAF (191 aa)).

It belongs to the WrbA family.

It localises to the cytoplasm. The chain is Minor allergen Alt a 7 (ALTA7) from Alternaria alternata (Alternaria rot fungus).